The primary structure comprises 275 residues: 2,3,4,5-tetrahydropyridine-2,6-dicarboxylate N-succinyltransferase (275 aa).

Arginine 104 and aspartate 141 together coordinate substrate.

It belongs to the transferase hexapeptide repeat family. In terms of assembly, homotrimer.

The protein resides in the cytoplasm. It carries out the reaction (S)-2,3,4,5-tetrahydrodipicolinate + succinyl-CoA + H2O = (S)-2-succinylamino-6-oxoheptanedioate + CoA. The protein operates within amino-acid biosynthesis; L-lysine biosynthesis via DAP pathway; LL-2,6-diaminopimelate from (S)-tetrahydrodipicolinate (succinylase route): step 1/3. The polypeptide is 2,3,4,5-tetrahydropyridine-2,6-dicarboxylate N-succinyltransferase (Tolumonas auensis (strain DSM 9187 / NBRC 110442 / TA 4)).